A 543-amino-acid polypeptide reads, in one-letter code: MKFLTTGLLATAALAAAQEQHVLQAEDGHGQAPQRDASIFDETLQKFQSSLEDGISHFWSEMKTNFKDYLPLISLPKKHTRRPDSEWDHVVRGADIESVWVQGADGEKRREIDGKLHNYDLRVKAVDPSKLGVDPGVKQYSGYLDDNDADKHLFYWFFESRNDPKNDPVVLWLNGGPGCSSLTGLFLELGPATIDKNLKVVSNPYSWNSNASVIFLDQPVNVGFSYSGSSVSDTVAAGKDVYALLTLFFKQFPEYASQDFHISGESYAGHYIPVFAAEILSHKNTNINLKSALIGNGLTDPLTQYPQYRPMACGEGGYPAVLDQGTCRSMDNSLERCLSLIETCYSSESAWVCVPAAMYCNSAILAPYQQTGMNPYDVRTKCEDMASLCYPQLNAITKWLNQESVMQALGVEVQSYESCNSGINRDFLFHGDWMKPYHRLVPSVLEKIPVLIYAGDADFICNWLGNLAWTDALEWPGHKKFAEAKLEDLKIVNNKDKGKKIGQVKSSGNFTFMRIFGAGHMVPLNQPEASLEFFNRWLGGEWH.

An N-terminal signal peptide occupies residues 1–17 (MKFLTTGLLATAALAAA). Residues 18 to 124 (QEQHVLQAED…KLHNYDLRVK (107 aa)) constitute a propeptide that is removed on maturation. Intrachain disulfides connect cysteine 179-cysteine 419, cysteine 313-cysteine 327, cysteine 337-cysteine 360, cysteine 344-cysteine 353, and cysteine 382-cysteine 389. A glycan (N-linked (GlcNAc...) asparagine) is linked at asparagine 210. The active site involves serine 266. The active site involves aspartate 458. The N-linked (GlcNAc...) asparagine glycan is linked to asparagine 509. Residue histidine 520 is part of the active site.

The protein belongs to the peptidase S10 family.

The protein localises to the vacuole. The catalysed reaction is Release of a C-terminal amino acid with broad specificity.. Vacuolar carboxypeptidase involved in degradation of small peptides. Digests preferentially peptides containing an aliphatic or hydrophobic residue in P1' position, as well as methionine, leucine or phenylalanine in P1 position of ester substrate. This chain is Carboxypeptidase Y homolog A (cpyA), found in Trichophyton verrucosum (strain HKI 0517).